The sequence spans 976 residues: Vacuolar membrane protease (976 aa).

The Cytoplasmic segment spans residues 1–51 (MPLSTGLTLSSLNVMEKADNHYNMMTKQPPALSPVDMVSSRRGFNPIAFTP). Residues 52–72 (WPVTILSSLVYLAFIIPIIVV) form a helical membrane-spanning segment. Residues 73-399 (HHLVPPAPKE…DNGNDGKLNN (327 aa)) lie on the Vacuolar side of the membrane. N-linked (GlcNAc...) asparagine glycosylation is found at Asn147 and Asn150. Zn(2+) contacts are provided by His206 and Asp218. Glu252 serves as the catalytic Proton acceptor. Zn(2+)-binding residues include Glu253, Glu278, and His351. A helical membrane pass occupies residues 400–420 (GAGTLGVWFDFYGSSFAVFEL). Topologically, residues 421–427 (NTLFGHS) are cytoplasmic. The helical transmembrane segment at 428–448 (VALLVVAPLLLIATCVTLYTL) threads the bilayer. At 449–477 (DKMYMFSMYTYLSESGGQVSLYGLRGLFR) the chain is on the vacuolar side. A helical transmembrane segment spans residues 478–498 (FPLILGISTALTIGLAFLLMK). Topologically, residues 499-519 (ANPFIIYSSPYAVWNPSALHR) are cytoplasmic. Residues 520–540 (AYAFTWMFGMMWVLLVIATVY) traverse the membrane as a helical segment. Residues 541–550 (QKQHGIASSY) lie on the Vacuolar side of the membrane. The helical transmembrane segment at 551–571 (FIVFYFAGVSIATWISYLELF) threads the bilayer. At 572–675 (GLPTTQDYAR…HRLEQRWSIN (104 aa)) the chain is on the cytoplasmic side. Residues 590-633 (TPSSDSRLLAPSADELPPSGSAAGHDFNPEDVEDEEPTESTSLL) are disordered. Residues 618 to 627 (PEDVEDEEPT) show a composition bias toward acidic residues. The chain crosses the membrane as a helical span at residues 676–696 (LISSAWILQFLFVAPIVIILL). The Vacuolar segment spans residues 697-718 (GQLGLFLTSATYQIGADGGSQL). Residues 719–739 (VIYVGIAVLSVLILLPLFPFI) form a helical membrane-spanning segment. Topologically, residues 740–745 (HRFTYH) are cytoplasmic. The chain crosses the membrane as a helical span at residues 746–766 (IPTFLLFVLIGTLVYNLTAFP). Topologically, residues 767-976 (FSHSNRLKVA…LVEGSHSFKL (210 aa)) are vacuolar. The N-linked (GlcNAc...) asparagine glycan is linked to Asn848.

It belongs to the peptidase M28 family. The cofactor is Zn(2+).

Its subcellular location is the vacuole membrane. Its function is as follows. May be involved in vacuolar sorting and osmoregulation. This is Vacuolar membrane protease from Arthroderma otae (strain ATCC MYA-4605 / CBS 113480) (Microsporum canis).